A 928-amino-acid chain; its full sequence is RhoGEF domain-containing protein gxcH (928 aa).

A compositionally biased stretch (low complexity) spans 30 to 48; it reads SKSFDNNNNNNSNTNNIKN. 3 disordered regions span residues 30–76, 90–201, and 318–410; these read SKSF…PPVP, ITNY…PPLG, and DNGV…NKDT. Residues 93–103 are compositionally biased toward polar residues; the sequence is YIPTTPPSINI. The span at 112-123 shows a compositional bias: acidic residues; sequence DNYDDNYDDNYS. Polar residues-rich tracts occupy residues 129 to 141, 175 to 187, and 334 to 367; these read TSTT…SPEF, ETFN…EGLQ, and KSGT…NLRG. Residues 377–407 show a composition bias toward low complexity; the sequence is NQTTNKNNSNNNNNNTTTNNNNNNNNNNNNN. In terms of domain architecture, DH spans 484-671; the sequence is IFNKVVKEII…GKIVSDINGK (188 aa). The tract at residues 699–807 is PH-like; the sequence is FIGEGKVKKV…NKIEDQIVSE (109 aa). The segment at 835 to 928 is disordered; sequence SDSQSDFVDH…NTEPENFSFY (94 aa). Residues 848-857 show a composition bias toward low complexity; the sequence is QEQQEQQQQQ.

In terms of biological role, GTPase-activating protein. This is RhoGEF domain-containing protein gxcH (gxcH) from Dictyostelium discoideum (Social amoeba).